The chain runs to 192 residues: Ion-translocating oxidoreductase complex subunit A (192 aa).

Helical transmembrane passes span 5-25 (LLLL…FLGL), 39-59 (IGMS…SYLV), 65-85 (LPFD…AVVV), 102-122 (ALGI…VALL), 134-154 (AIFG…FSAM), and 171-191 (AIAM…TGLV).

The protein belongs to the NqrDE/RnfAE family. As to quaternary structure, the complex is composed of six subunits: RnfA, RnfB, RnfC, RnfD, RnfE and RnfG.

The protein localises to the cell inner membrane. Functionally, part of a membrane-bound complex that couples electron transfer with translocation of ions across the membrane. The protein is Ion-translocating oxidoreductase complex subunit A of Shewanella pealeana (strain ATCC 700345 / ANG-SQ1).